A 114-amino-acid polypeptide reads, in one-letter code: Aspartate 1-decarboxylase (114 aa).

Catalysis depends on S25, which acts as the Schiff-base intermediate with substrate; via pyruvic acid. S25 bears the Pyruvic acid (Ser) mark. Substrate is bound at residue T57. Y58 (proton donor) is an active-site residue. 73-75 (GAA) provides a ligand contact to substrate.

It belongs to the PanD family. Heterooctamer of four alpha and four beta subunits. Pyruvate is required as a cofactor. Post-translationally, is synthesized initially as an inactive proenzyme, which is activated by self-cleavage at a specific serine bond to produce a beta-subunit with a hydroxyl group at its C-terminus and an alpha-subunit with a pyruvoyl group at its N-terminus.

The protein resides in the cytoplasm. The enzyme catalyses L-aspartate + H(+) = beta-alanine + CO2. Its pathway is cofactor biosynthesis; (R)-pantothenate biosynthesis; beta-alanine from L-aspartate: step 1/1. Its function is as follows. Catalyzes the pyruvoyl-dependent decarboxylation of aspartate to produce beta-alanine. The sequence is that of Aspartate 1-decarboxylase from Thermotoga sp. (strain RQ2).